Reading from the N-terminus, the 153-residue chain is MALVFVYGTLKRGQPNHRVLRDGAHGSAAFRARGRTLEPYPLVIAGEHNIPWLLHLPGSGRLVEGEVYAVDERMLRFLDDFESCPALYQRTVLRVQLLEDRAPGAEEPPAPTAVQCFVYSRATFPPEWAQLPHHDSYDSEGPHGLRYNPRENR.

7 to 10 (YGTL) is a binding site for substrate. E82 (proton acceptor) is an active-site residue. The interval 130 to 153 (QLPHHDSYDSEGPHGLRYNPRENR) is disordered. Over residues 132 to 153 (PHHDSYDSEGPHGLRYNPRENR) the composition is skewed to basic and acidic residues.

Belongs to the gamma-glutamylcyclotransferase family. As to quaternary structure, monomer.

It catalyses the reaction epsilon-(gamma-L-glutamyl)-L-lysine = 5-oxo-L-proline + L-lysine. Its function is as follows. Contributes to degradation of proteins cross-linked by transglutaminases by degrading the cross-link between a lysine and a glutamic acid residue. Catalyzes the formation of 5-oxo-L-proline from L-gamma-glutamyl-L-epsilon-lysine. Inactive with L-gamma-glutamyl-alpha-amino acid substrates such as L-gamma-glutamyl-L-alpha-cysteine and L-gamma-glutamyl-L-alpha-alanine. The polypeptide is Gamma-glutamylaminecyclotransferase (GGACT) (Homo sapiens (Human)).